The primary structure comprises 93 residues: Protein salt-induced and EIN3/EIL1-dependent 1 (93 aa).

A compositionally biased stretch (low complexity) spans 23 to 36 (SSLLTESSSSSLCS). The tract at residues 23-46 (SSLLTESSSSSLCSEEAEGGGGEA) is disordered.

Triggered by EIN3. Its function is as follows. Involved in ethylene-dependent salt stress responses by reducing reactive oxygen species (ROS) accumulation. This Arabidopsis thaliana (Mouse-ear cress) protein is Protein salt-induced and EIN3/EIL1-dependent 1.